Consider the following 253-residue polypeptide: tRNA pseudouridine synthase A (253 aa).

The active-site Nucleophile is the Asp52. Residue Tyr111 coordinates substrate.

This sequence belongs to the tRNA pseudouridine synthase TruA family. Homodimer.

It carries out the reaction uridine(38/39/40) in tRNA = pseudouridine(38/39/40) in tRNA. Its function is as follows. Formation of pseudouridine at positions 38, 39 and 40 in the anticodon stem and loop of transfer RNAs. The protein is tRNA pseudouridine synthase A of Methylobacterium radiotolerans (strain ATCC 27329 / DSM 1819 / JCM 2831 / NBRC 15690 / NCIMB 10815 / 0-1).